The following is a 226-amino-acid chain: Lipoprotein-releasing system ATP-binding protein LolD (226 aa).

An ABC transporter domain is found at 6–226 (VLISGLTKTF…KLYKGNLEEV (221 aa)). Residue 42-49 (GESGSGKS) participates in ATP binding.

The protein belongs to the ABC transporter superfamily. Lipoprotein translocase (TC 3.A.1.125) family. In terms of assembly, the complex is composed of two ATP-binding proteins (LolD) and two transmembrane proteins (LolC and LolE).

It is found in the cell inner membrane. Functionally, part of the ABC transporter complex LolCDE involved in the translocation of mature outer membrane-directed lipoproteins, from the inner membrane to the periplasmic chaperone, LolA. Responsible for the formation of the LolA-lipoprotein complex in an ATP-dependent manner. The polypeptide is Lipoprotein-releasing system ATP-binding protein LolD (Treponema denticola (strain ATCC 35405 / DSM 14222 / CIP 103919 / JCM 8153 / KCTC 15104)).